A 463-amino-acid polypeptide reads, in one-letter code: Peptidase inhibitor 16 (463 aa).

Positions 1 to 27 (MHGSCSFLMLLLPLLLLLVATTGPVGA) are cleaved as a signal peptide. The 129-residue stretch at 37–165 (VELHNLYRAQ…TNIELLVCNY (129 aa)) folds into the SCP domain. An N-linked (GlcNAc...) asparagine glycan is attached at Asn-114. Disordered regions lie at residues 262–281 (TQAPTSLATKDPPSMATEAP), 303–341 (EPVTFPKSTHVPIPKSADKVTDKTKVPSRSPENSLDPKM), and 383–408 (LQATLDHTGHTSSKSLPNFPNTSATA). Over residues 318-327 (SADKVTDKTK) the composition is skewed to basic and acidic residues. The O-glycosylated at one site stretch occupies residues 386–395 (TLDHTGHTSS). Polar residues predominate over residues 392-408 (HTSSKSLPNFPNTSATA). Residues Asn-403 and Asn-409 are each glycosylated (N-linked (GlcNAc...) asparagine).

The protein belongs to the CRISP family. In terms of assembly, interacts with PSP94/MSMB. In terms of processing, N- and O-glycosylated. O-glycosylated with core 1 or possibly core 8 glycans. Expressed in prostate, testis, ovary and intestine. Concentrates in prostate cancer patient's sera.

Its subcellular location is the secreted. May inhibit cardiomyocyte growth. This is Peptidase inhibitor 16 (PI16) from Homo sapiens (Human).